The primary structure comprises 576 residues: Proline--tRNA ligase (576 aa).

This sequence belongs to the class-II aminoacyl-tRNA synthetase family. ProS type 1 subfamily. As to quaternary structure, homodimer.

The protein localises to the cytoplasm. It catalyses the reaction tRNA(Pro) + L-proline + ATP = L-prolyl-tRNA(Pro) + AMP + diphosphate. Functionally, catalyzes the attachment of proline to tRNA(Pro) in a two-step reaction: proline is first activated by ATP to form Pro-AMP and then transferred to the acceptor end of tRNA(Pro). As ProRS can inadvertently accommodate and process non-cognate amino acids such as alanine and cysteine, to avoid such errors it has two additional distinct editing activities against alanine. One activity is designated as 'pretransfer' editing and involves the tRNA(Pro)-independent hydrolysis of activated Ala-AMP. The other activity is designated 'posttransfer' editing and involves deacylation of mischarged Ala-tRNA(Pro). The misacylated Cys-tRNA(Pro) is not edited by ProRS. The sequence is that of Proline--tRNA ligase from Leptospira borgpetersenii serovar Hardjo-bovis (strain JB197).